The following is a 119-amino-acid chain: RNA guanine-N7 methyltransferase activating subunit (119 aa).

The interval 1 to 55 (MSDTSEEIPNFEEMFASRFTKDDKEYQEYLKRPPESPPIVEEWNSRAGGNQRNRG) is interaction with RNMT. Positions 30-119 (LKRPPESPPI…HNQRPPYGYY (90 aa)) are disordered. S36 carries the phosphoserine modification. The RNMT-activating domain signature appears at 36-42 (SPPIVEE). Residues 47–61 (AGGNQRNRGNWLQDN) are compositionally biased toward polar residues. The segment at 56–119 (NWLQDNRQFR…HNQRPPYGYY (64 aa)) is RNA-binding. Positions 62-73 (RQFRGRDNRRGW) are enriched in basic and acidic residues. At R85 the chain carries Omega-N-methylarginine. S86 bears the Phosphoserine mark. Residues 89–112 (NNNYPQQRPEPYYQQQYTQYGHNQ) show a composition bias toward low complexity.

This sequence belongs to the RAM family. Interacts with RNMT; this interaction enhances mRNA binding and cap methyltransferase activity.

It is found in the nucleus. Its function is as follows. Regulatory subunit of the mRNA-capping methyltransferase RNMT:RAMAC complex that methylates the N7 position of the added guanosine to the 5'-cap structure of mRNAs. Promotes the recruitment of the methyl donor, S-adenosyl-L-methionine, to RNMT. Regulates RNMT expression by a post-transcriptional stabilizing mechanism. Binds RNA. This is RNA guanine-N7 methyltransferase activating subunit (Ramac) from Mus musculus (Mouse).